The primary structure comprises 147 residues: CLAVATA3/ESR (CLE)-related protein 4C (147 aa).

Residues 1 to 21 (MATNTMLCLFVISVVLALAFA) form the signal peptide. The interval 21-83 (ATNKKGDEEP…SNQLPNNNWM (63 aa)) is required for secretion from the host cytoplasm to the host apoplasm. An N-linked (GlcNAc...) asparagine glycan is attached at asparagine 32. Disordered regions lie at residues 57–86 (GADA…MAPP) and 116–147 (RKTG…PIHH). Over residues 125–137 (HHEETTLEQEKRV) the composition is skewed to basic and acidic residues. The short motif at 136–147 (RVAGAGPDPIHH) is the CLE element.

Belongs to the CLV3/ESR signal peptide family. As to expression, highly expressed exclusively within the dorsal esophageal gland cell during syncytium formation in host plants.

Its subcellular location is the secreted. The protein localises to the host cytoplasm. The protein resides in the host extracellular space. It localises to the extracellular space. It is found in the apoplast. Its function is as follows. Mimics host plant CLE extracellular signal peptides that regulate cell fate. May play a role in the differentiation or division of feeding cells (syncytia) induced in plant roots during infection. The sequence is that of CLAVATA3/ESR (CLE)-related protein 4C (CLE-4C) from Globodera rostochiensis (Golden nematode worm).